The primary structure comprises 290 residues: Nucleoid occlusion protein (290 aa).

A DNA-binding region (H-T-H motif) is located at residues 153 to 172 (EALAQRLGKGQSTVANKLRL).

It belongs to the ParB family.

The protein localises to the cytoplasm. It is found in the nucleoid. Its function is as follows. Effects nucleoid occlusion by binding relatively nonspecifically to DNA and preventing the assembly of the division machinery in the vicinity of the nucleoid, especially under conditions that disturb the cell cycle. It helps to coordinate cell division and chromosome segregation by preventing the formation of the Z ring through the nucleoid, which would cause chromosome breakage. This Bacillus mycoides (strain KBAB4) (Bacillus weihenstephanensis) protein is Nucleoid occlusion protein.